The following is a 313-amino-acid chain: Alpha/beta-gliadin clone PW8142 (313 aa).

The signal sequence occupies residues 1-20 (MKTFLILALVATTATTAVRV). Residues 22–55 (VPQLQPKNPSQQQPQEQVPLVQQQQFPGQQQQFP) show a composition bias toward low complexity. 2 disordered regions span residues 22–122 (VPQL…QQAQ) and 234–272 (QQPSSQVSFQQPQQQYPSSQGSFQPSQQNPQAQGSVQPQ). Composition is skewed to pro residues over residues 56 to 68 (PQQPYPQPQPFPS) and 78 to 101 (FPQPQPFLPQLPYPQPQSFPPQQP). Composition is skewed to low complexity over residues 102 to 122 (YPQQRPKYLQPQQPISQQQAQ) and 234 to 264 (QQPSSQVSFQQPQQQYPSSQGSFQPSQQNPQ).

The protein belongs to the gliadin/glutenin family. Substrate of transglutaminase.

In terms of biological role, gliadin is the major seed storage protein in wheat. This chain is Alpha/beta-gliadin clone PW8142, found in Triticum aestivum (Wheat).